We begin with the raw amino-acid sequence, 75 residues long: Acyl carrier protein (75 aa).

The 74-residue stretch at 1-74 folds into the Carrier domain; sequence MLDKVKEIIV…DVINYIEANK (74 aa). Ser34 carries the post-translational modification O-(pantetheine 4'-phosphoryl)serine.

The protein belongs to the acyl carrier protein (ACP) family. In terms of processing, 4'-phosphopantetheine is transferred from CoA to a specific serine of apo-ACP by AcpS. This modification is essential for activity because fatty acids are bound in thioester linkage to the sulfhydryl of the prosthetic group.

It is found in the cytoplasm. It participates in lipid metabolism; fatty acid biosynthesis. In terms of biological role, carrier of the growing fatty acid chain in fatty acid biosynthesis. The polypeptide is Acyl carrier protein (Fusobacterium nucleatum subsp. nucleatum (strain ATCC 25586 / DSM 15643 / BCRC 10681 / CIP 101130 / JCM 8532 / KCTC 2640 / LMG 13131 / VPI 4355)).